The sequence spans 309 residues: MVKVYAPASSANMSVGFDVLGAAVTPVDGTLLGDNVTVEAAEQFSLHNLGRFASKLPTAPQENIVYQCWESFCQEIGKTVPVTMTLEKNMPIGSGLGSSACSVVAALVAMNEFCGKPLNETRMLALMGEMEGRISGSIHYDNVAPCYLGGMQLMIEENGIISQQVPGFDEWLWVLAYPGIKVSTAEARAILPAQYRRQDCIAHGRHLAGFIHACYTRQPQLAAKLMKDVIAEPYRTKLLPGFSEARQATMEIGAQACGISGSGPTLFALCDKPDTAQRVADWLGAHYLQNQEGFVHICRLDTAGARVVG.

Position 91–101 (91–101) interacts with ATP; it reads PIGSGLGSSAC.

The protein belongs to the GHMP kinase family. Homoserine kinase subfamily.

Its subcellular location is the cytoplasm. It carries out the reaction L-homoserine + ATP = O-phospho-L-homoserine + ADP + H(+). It participates in amino-acid biosynthesis; L-threonine biosynthesis; L-threonine from L-aspartate: step 4/5. Its function is as follows. Catalyzes the ATP-dependent phosphorylation of L-homoserine to L-homoserine phosphate. This is Homoserine kinase from Klebsiella pneumoniae (strain 342).